A 342-amino-acid polypeptide reads, in one-letter code: S-adenosylmethionine:tRNA ribosyltransferase-isomerase (342 aa).

The protein belongs to the QueA family. Monomer.

The protein resides in the cytoplasm. It catalyses the reaction 7-aminomethyl-7-carbaguanosine(34) in tRNA + S-adenosyl-L-methionine = epoxyqueuosine(34) in tRNA + adenine + L-methionine + 2 H(+). It functions in the pathway tRNA modification; tRNA-queuosine biosynthesis. In terms of biological role, transfers and isomerizes the ribose moiety from AdoMet to the 7-aminomethyl group of 7-deazaguanine (preQ1-tRNA) to give epoxyqueuosine (oQ-tRNA). The chain is S-adenosylmethionine:tRNA ribosyltransferase-isomerase from Streptococcus pyogenes serotype M2 (strain MGAS10270).